The following is a 430-amino-acid chain: Putative ABC transporter periplasmic-binding protein YcjN (430 aa).

Residues 1 to 19 (MIKSKIVLLSALVSCALIS) form the signal peptide.

Belongs to the bacterial solute-binding protein 1 family.

The protein localises to the periplasm. Probably part of the binding-protein-dependent transport system YcjNOP. The polypeptide is Putative ABC transporter periplasmic-binding protein YcjN (ycjN) (Escherichia coli (strain K12)).